We begin with the raw amino-acid sequence, 1612 residues long: uncharacterized protein (1612 aa).

Residues 23-52 adopt a coiled-coil conformation; it reads ENKNIEMTTLKDKKEMKNENLSKINVKKEN. The span at 46–93 shows a compositional bias: basic and acidic residues; the sequence is INVKKENHDKNHDKNHDKNHDKNHDKNHDKNHDKNHDKNHDKNHDKNH. Disordered stretches follow at residues 46–94 and 369–400; these read INVK…KNHV and EDDN…HEIQ. A compositionally biased stretch (polar residues) spans 375-394; the sequence is DNPLYSNNNTLKEQNTSTPL. The chain crosses the membrane as a helical span at residues 479–499; the sequence is FIVTLSEICLILTPHYVNIIN. Disordered regions lie at residues 698–777, 992–1037, 1091–1157, and 1257–1291; these read TSLT…EKKL, NELD…KNDP, SGKS…RNMS, and NQTT…NQDK. Residues 708–777 are compositionally biased toward basic and acidic residues; the sequence is KNDEIKKTGE…KKKTGEEKKL (70 aa). 3 stretches are compositionally biased toward low complexity: residues 996 to 1028, 1102 to 1140, and 1257 to 1271; these read NNNN…NNNN, SNNN…NSTN, and NQTT…QTSN. Coiled coils occupy residues 1338-1362, 1444-1469, and 1553-1601; these read YCNN…INNK, SNKK…IDND, and NMED…KFLT. Residues 1554–1566 are compositionally biased toward basic and acidic residues; the sequence is MEDEKNEKLNDKE. Positions 1554–1612 are disordered; sequence MEDEKNEKLNDKEGEYEDVTENLNEQEAEEEAEEEAEEEEEEEDKFLTPEHLPINVEIK. Acidic residues predominate over residues 1567 to 1597; it reads GEYEDVTENLNEQEAEEEAEEEAEEEEEEED.

The protein resides in the membrane. This is an uncharacterized protein from Plasmodium falciparum (isolate 3D7).